The primary structure comprises 554 residues: Nuclear division defective protein 1 (554 aa).

Disordered regions lie at residues 1 to 31 and 98 to 117; these read MDRDISYQQNYTSTGATATSSRQPSTDNNAD and IQQQQQQQQQQQQQQQALGS. The segment covering 98-113 has biased composition (low complexity); it reads IQQQQQQQQQQQQQQQ. Residue threonine 319 is modified to Phosphothreonine; by CDC28. 2 disordered regions span residues 410 to 475 and 493 to 554; these read PTPN…GKKP and SSSS…FNSQ. A compositionally biased stretch (polar residues) spans 411–427; it reads TPNCNSLHSTTTGTSAL. Residues 448–465 show a composition bias toward low complexity; the sequence is SSSNTVSFKSKSGNNNSK. A compositionally biased stretch (basic residues) spans 466-475; that stretch reads GRIKKNGKKP. Residues 493 to 513 show a composition bias toward low complexity; sequence SSSSLSSSLNASSSAGNSNSN. Residues 515 to 524 are compositionally biased toward basic residues; the sequence is TKKRASKLKR. Low complexity predominate over residues 525 to 536; that stretch reads SQSLLSDSGSKS. The segment covering 539–554 has biased composition (polar residues); that stretch reads RKSCNSKSNGNLFNSQ.

Forms an activator complex with FKH2. Phosphorylation of Thr-319 by CDC28 is required for the interaction with FKH2 and recruitment to promoters.

The protein localises to the cytoplasm. The protein resides in the nucleus. In terms of biological role, transcription activator involved in G2/M transcription through its association with FKH2. The sequence is that of Nuclear division defective protein 1 (NDD1) from Saccharomyces cerevisiae (strain ATCC 204508 / S288c) (Baker's yeast).